The primary structure comprises 312 residues: Nicotinamide adenine dinucleotide transporter 1, chloroplastic (312 aa).

3 Solcar repeats span residues 11–103 (KNVL…LKSF), 111–199 (LSVG…IKVY), and 211–299 (LNAR…VHRF). The next 6 membrane-spanning stretches (helical) occupy residues 17–37 (AAAGAAAGVVAATFVCPLDVI), 78–98 (GLSPTVMALLSNWAIYFTMYD), 117–137 (VLAASGAGAATTIATNPLWVV), 171–191 (GLYSGLVPALAGISHVAIQFP), 216–232 (VAVASSIAKIFASTLTY), and 271–293 (FYRGCATNLLRTTPAAVITFTSF).

Belongs to the mitochondrial carrier (TC 2.A.29) family. Highly expressed in young leaf mesophyll cells, root tips and at the branches of adventitious roots. Low expression in all flower tissues and not detected in siliques and seeds.

The protein localises to the plastid. Its subcellular location is the chloroplast membrane. Inhibited by pyridoxal 5'-phosphate, bathophenanthroline, tannic acid, mersalyl, mercuric chloride, p-hydroxymercuribenzoate, p-hydroxymercuribenzoate sulfonate, bromocresol purple and N-ethylmaleimide. Functionally, mediates the NAD(+) import into chloroplast. Favors the NAD(+)(in)/ADP or AMP(out) antiport exchange, but is also able to catalyze a low unidirectional transport (uniport) of NAD(+). Transports NAD(+), nicotinic acid adenine dinucleotide, nicotinamide mononucleotide, nicotinic acid mononucleotide, FAD, FMN, TTP, TDP, TMP, UTP, UDP, UMP, CTP, CDP, CMP, GTP, GDP, GMP, 3'-AMP, ATP, ADP, and AMP, has low transport activity with cAMP, pyrophosphate, NADH and alpha-NAD(+), and has no activity with NADP(+), NADPH, nicotinamide, nicotinic acid, adenosine, thiamine mono- or diphosphate, inorganic phosphate, CoA, folate, NaCl, malate, malonate, citrate, fumarate, aspartate, glutamate, S-adenosylmethionine, lysine, arginine, and ornithine. This Arabidopsis thaliana (Mouse-ear cress) protein is Nicotinamide adenine dinucleotide transporter 1, chloroplastic (NDT1).